A 314-amino-acid polypeptide reads, in one-letter code: Phosphoribosylaminoimidazole-succinocarboxamide synthase (314 aa).

The protein belongs to the SAICAR synthetase family.

It carries out the reaction 5-amino-1-(5-phospho-D-ribosyl)imidazole-4-carboxylate + L-aspartate + ATP = (2S)-2-[5-amino-1-(5-phospho-beta-D-ribosyl)imidazole-4-carboxamido]succinate + ADP + phosphate + 2 H(+). It participates in purine metabolism; IMP biosynthesis via de novo pathway; 5-amino-1-(5-phospho-D-ribosyl)imidazole-4-carboxamide from 5-amino-1-(5-phospho-D-ribosyl)imidazole-4-carboxylate: step 1/2. The sequence is that of Phosphoribosylaminoimidazole-succinocarboxamide synthase from Bacteroides thetaiotaomicron (strain ATCC 29148 / DSM 2079 / JCM 5827 / CCUG 10774 / NCTC 10582 / VPI-5482 / E50).